The primary structure comprises 275 residues: Ribosomal RNA small subunit methyltransferase A (275 aa).

S-adenosyl-L-methionine is bound by residues N19, L21, G46, E71, D94, and N117.

Belongs to the class I-like SAM-binding methyltransferase superfamily. rRNA adenine N(6)-methyltransferase family. RsmA subfamily.

Its subcellular location is the cytoplasm. It catalyses the reaction adenosine(1518)/adenosine(1519) in 16S rRNA + 4 S-adenosyl-L-methionine = N(6)-dimethyladenosine(1518)/N(6)-dimethyladenosine(1519) in 16S rRNA + 4 S-adenosyl-L-homocysteine + 4 H(+). In terms of biological role, specifically dimethylates two adjacent adenosines (A1518 and A1519) in the loop of a conserved hairpin near the 3'-end of 16S rRNA in the 30S particle. May play a critical role in biogenesis of 30S subunits. The protein is Ribosomal RNA small subunit methyltransferase A of Burkholderia pseudomallei (strain 668).